Reading from the N-terminus, the 999-residue chain is Testis anion transporter 1 (999 aa).

Residues 1 to 93 (MQTERSLQSF…YRFKDWLLGD (93 aa)) lie on the Cytoplasmic side of the membrane. Residues 94 to 114 (LLAGLSVGLVQVPQGLILSLL) form a helical membrane-spanning segment. Over 115–117 (TRQ) the chain is Extracellular. A helical membrane pass occupies residues 118–138 (LIPPLNVTYAAFCSSVIYVIF). Residue Gly-139 is a topological domain, cytoplasmic. The chain crosses the membrane as a helical span at residues 140-160 (SCHQMSIGPFFLVSALMINVL). Residues 161 to 200 (KDRPFNNGHLILGTFVKDDFSVPTFYLSYNRSLSMVASTT) lie on the Extracellular side of the membrane. The N-linked (GlcNAc...) asparagine glycan is linked to Asn-190. A helical transmembrane segment spans residues 201–221 (FLTGIIQLSMGMLGMGFMATY). Residues 222 to 230 (LPEAATSAY) are Cytoplasmic-facing. A helical transmembrane segment spans residues 231 to 251 (LAAVALHIILAQMTCILGIMV). Residues 252 to 268 (SFHAGPISFIYNIINYC) lie on the Extracellular side of the membrane. A helical membrane pass occupies residues 269-289 (IALPKANSTSILLFITSVVAL). Residues 290–305 (RINKCIRITFNRYPIE) are Cytoplasmic-facing. The chain crosses the membrane as a helical span at residues 306–326 (FPMELLLILGFSLLTSKITMA). Residues 327–354 (TENSKMLMNMIPYSFVFPENPEFGILSR) lie on the Extracellular side of the membrane. Residues 355 to 375 (VVLQALSLSFVSSFLLISLGK) form a helical membrane-spanning segment. Residues 376 to 390 (KIANFHNYRTNSNQD) lie on the Cytoplasmic side of the membrane. Residues 391–411 (LIAIGLCNLLSSFFKCCVFTG) traverse the membrane as a helical segment. The Extracellular segment spans residues 412–427 (SLSRTTIQDKSGGRQQ). Residues 428-448 (FASLVGAGVMLLLMVKMESFF) form a helical membrane-spanning segment. The Cytoplasmic portion of the chain corresponds to 449–453 (HNLPN). Residues 454–474 (AVLAGIILSNVVPYLEAIYNL) traverse the membrane as a helical segment. The Extracellular portion of the chain corresponds to 475–494 (PSLWRQDQYECIIWMVTFSS). Residues 495–515 (AILLGLDVGLLISLAFTFFVI) form a helical membrane-spanning segment. At 516–544 (TIRSHRTKILVLGQIPNTNIYRNVNDYRE) the chain is on the cytoplasmic side. The 256-residue stretch at 541-796 (DYREVILIPG…LSLHDAVLFA (256 aa)) folds into the STAS domain. Residues 545 to 565 (VILIPGVKIFQCCSSITFVNV) form a helical membrane-spanning segment. The Extracellular portion of the chain corresponds to 566–999 (YHLKQKVLKE…RKPHNYPNSP (434 aa)). The interaction with RACGAP1 stretch occupies residues 661-999 (TVSSTSQRNI…RKPHNYPNSP (339 aa)). Disordered regions lie at residues 678–701 (EKAWLPNSPPRNSPLPPPEASESL) and 893–999 (SELD…PNSP). Residues 684 to 696 (NSPPRNSPLPPPE) show a composition bias toward pro residues. Composition is skewed to acidic residues over residues 893–903 (SELDPGSELDS) and 912–947 (ELESELETDAQTEPETEEEPELEPEPEPEPETEPEP). A compositionally biased stretch (polar residues) spans 973-982 (GSSNSQSRAP).

This sequence belongs to the SLC26A/SulP transporter (TC 2.A.53) family. In terms of assembly, interacts with RACGAP1. Interacts with CFTR; stimulates anion transport activity of CFTR. N-glycosylated. As to expression, expressed in testis and epididymis. Located at the end of the midpiece of the flagella, known as the annulus, in spermatozoa.

The protein localises to the membrane. The enzyme catalyses sulfate(out) + chloride(in) = sulfate(in) + chloride(out). It carries out the reaction oxalate(in) + chloride(out) = oxalate(out) + chloride(in). In terms of biological role, antiporter that mediates the exchange of sulfate and oxalate against chloride ions across a membrane. Stimulates anion transport activity of CFTR. May cooperate with CFTR in the regulation of chloride and bicarbonate ions fluxes required for activation of the ADCY10/PKA pathway during sperm motility and sperm capacitation. May play a role in sperm tail differentiation and motility and hence male fertility. The polypeptide is Testis anion transporter 1 (Mus musculus (Mouse)).